A 539-amino-acid chain; its full sequence is F-box/WD-40 repeat-containing protein At5g21040 (539 aa).

The F-box domain maps to 65-111 (STTIIDLPQALISEILNCLDPKELGLVSCVSTYLHRLASEHHAWKEF). WD repeat units lie at residues 160–199 (GHTEAVRTVFLLASAKLVFTSGYDSIVRMWDMEEGLSIAA), 201–239 (KPLGCTIRALAADTKLLVAGGTDGFIHCWKSLDGLRNLF), 255–292 (GHEGPITSLALDMTSIFSGSWDMSVRIWDRSSMKCVKT), 294–330 (RHSDWVWGLAPHETTLASTSGSDVYIWDVSSETPLAI), 334–373 (AHEGTTYSLARSHTGDFLFTGGEDGGIKMFEIRRYGSETS), 382–419 (PHTSPVYSLSFEFPWLVSASGDGKLALIDVRKLLKTNR), and 433–477 (PPQR…EIER). Residues 505 to 539 (GRPDQCSIAAHKNPINGERNRAWHSKRRASGKAKA) form a disordered region. Positions 526-539 (AWHSKRRASGKAKA) are enriched in basic residues.

In Arabidopsis thaliana (Mouse-ear cress), this protein is F-box/WD-40 repeat-containing protein At5g21040.